A 247-amino-acid chain; its full sequence is Complement C1q subcomponent subunit A (247 aa).

The signal sequence occupies residues 1 to 24; it reads MEAPRGWLVIMISVLAVSLASSAA. Residues 26 to 116 are disordered; sequence DTCRDLDGRD…NPGNIKDQRR (91 aa). Over residues 27 to 38 the composition is skewed to basic and acidic residues; it reads TCRDLDGRDGAA. Positions 33–111 constitute a Collagen-like domain; it reads GRDGAARKPG…KGIKGNPGNI (79 aa). 4-hydroxyproline is present on residues Pro-41 and Pro-47. Position 50 is a 5-hydroxylysine (Lys-50). A glycan (O-linked (Gal...) hydroxylysine) is linked at Lys-50. 4-hydroxyproline occurs at positions 56 and 59. Residue Lys-69 is modified to 5-hydroxylysine. The O-linked (Gal...) hydroxylysine glycan is linked to Lys-69. Residues Pro-81 and Pro-87 each carry the 4-hydroxyproline modification. The segment covering 98-109 has biased composition (low complexity); the sequence is LPGLKGIKGNPG. Position 102 is a 5-hydroxylysine (Lys-102). An O-linked (Gal...) hydroxylysine glycan is attached at Lys-102. A C1q domain is found at 112–247; that stretch reads KDQRRPAFSA…FSGFLIFPST (136 aa). The cysteines at positions 174 and 192 are disulfide-linked. Residue Gln-201 coordinates Ca(2+).

As to quaternary structure, core component of the complement C1 complex, a calcium-dependent complex composed of 1 molecule of the C1Q subcomplex, 2 molecules of C1R and 2 molecules of C1S. The C1Q subcomplex is composed 18 subunits: 3 chains of C1QA, C1QB, and C1QC trimerize to form 6 collagen-like triple helices connected to six globular ligand-recognition modules (C1q domain). Interacts with CR1 (via Sushi 24 and Sushi 25 domains). Interacts (via C-terminus) with CD33; this interaction activates CD33 inhibitory motifs. Post-translationally, O-linked glycans are assumed to be the Glc-Gal disaccharides typically found as secondary modifications of hydroxylated lysines in collagen-like domains.

The protein localises to the secreted. It is found in the cell surface. Its activity is regulated as follows. The C1Q subcomplex is inhibited by sulfated molecules, such as triterpenoid sulfates, heparan sulfate, or chondroitin sulfates. In terms of biological role, core component of the complement C1 complex, a multiprotein complex that initiates the classical pathway of the complement system, a cascade of proteins that leads to phagocytosis and breakdown of pathogens and signaling that strengthens the adaptive immune system. The classical complement pathway is initiated by the C1Q subcomplex of the C1 complex, which specifically binds IgG or IgM immunoglobulins complexed with antigens, forming antigen-antibody complexes on the surface of pathogens: C1QA, together with C1QB and C1QC, specifically recognizes and binds the Fc regions of IgG or IgM via its C1q domain. Immunoglobulin-binding activates the proenzyme C1R, which cleaves C1S, initiating the proteolytic cascade of the complement system. The C1Q subcomplex is activated by a hexamer of IgG complexed with antigens, while it is activated by a pentameric IgM. The C1Q subcomplex also recognizes and binds phosphatidylserine exposed on the surface of cells undergoing programmed cell death, possibly promoting activation of the complement system. The chain is Complement C1q subcomponent subunit A (C1QA) from Sus scrofa (Pig).